Reading from the N-terminus, the 173-residue chain is Large ribosomal subunit protein uL10 (173 aa).

Belongs to the universal ribosomal protein uL10 family. As to quaternary structure, part of the ribosomal stalk of the 50S ribosomal subunit. The N-terminus interacts with L11 and the large rRNA to form the base of the stalk. The C-terminus forms an elongated spine to which L12 dimers bind in a sequential fashion forming a multimeric L10(L12)X complex.

Its function is as follows. Forms part of the ribosomal stalk, playing a central role in the interaction of the ribosome with GTP-bound translation factors. The chain is Large ribosomal subunit protein uL10 from Chlorobium phaeobacteroides (strain BS1).